The primary structure comprises 230 residues: uncharacterized protein (230 aa).

Transmembrane regions (helical) follow at residues 34 to 54, 56 to 76, 87 to 107, 111 to 131, 146 to 166, 167 to 187, and 205 to 225; these read FFAG…MNFQ, VVQY…GLMF, MLFA…GMVI, GLGA…LMSV, MLFI…FLGS, PMFQ…YIAY, and VSLY…IGIF.

Belongs to the BI1 family.

Its subcellular location is the cell membrane. This is an uncharacterized protein from Helicobacter pylori (strain J99 / ATCC 700824) (Campylobacter pylori J99).